The following is a 97-amino-acid chain: uncharacterized protein (97 aa).

The interval 27 to 50 is disordered; the sequence is IGESEDKTNSRGQPATMKEDEVED.

This is an uncharacterized protein from Caldicellulosiruptor saccharolyticus (Caldocellum saccharolyticum).